A 245-amino-acid chain; its full sequence is Ribosomal RNA large subunit methyltransferase E (245 aa).

S-adenosyl-L-methionine contacts are provided by Gly-83, Trp-85, Asp-111, Asp-127, and Asp-156. The active-site Proton acceptor is the Lys-196.

Belongs to the class I-like SAM-binding methyltransferase superfamily. RNA methyltransferase RlmE family.

It is found in the cytoplasm. The catalysed reaction is uridine(2552) in 23S rRNA + S-adenosyl-L-methionine = 2'-O-methyluridine(2552) in 23S rRNA + S-adenosyl-L-homocysteine + H(+). Functionally, specifically methylates the uridine in position 2552 of 23S rRNA at the 2'-O position of the ribose in the fully assembled 50S ribosomal subunit. This is Ribosomal RNA large subunit methyltransferase E from Polaromonas naphthalenivorans (strain CJ2).